We begin with the raw amino-acid sequence, 504 residues long: Signal transduction histidine-protein kinase/phosphatase MprB (504 aa).

Over 1 to 26 the chain is Cytoplasmic; it reads MWWFRRRDRAPLRATSSLSLRWRVML. A helical membrane pass occupies residues 27–47; sequence LAMSMVAMVVVLMSFAVYAVI. Over 48-163 the chain is Extracellular; that stretch reads SAALYSDIDN…PTEAVMNKLR (116 aa). Residues 164-184 traverse the membrane as a helical segment; the sequence is WVLLIVGGIGVAVAAVAGGMV. The Cytoplasmic portion of the chain corresponds to 185–504; that stretch reads TRAGLRPVGR…SVESQSTRAT (320 aa). Residues 186-238 form the HAMP domain; sequence RAGLRPVGRLTEAAERVARTDDLRPIPVFGSDELARLTEAFNLMLRALAESRE. The region spanning 246 to 466 is the Histidine kinase domain; the sequence is DAGHELRTPL…SIYVLLPGRR (221 aa). The residue at position 249 (His-249) is a Phosphohistidine; by autocatalysis. The segment at 471-504 is disordered; that stretch reads QLPGATAGARSTDIENSRGSANVISVESQSTRAT. Positions 487-504 are enriched in polar residues; sequence SRGSANVISVESQSTRAT.

The cofactor is Mg(2+). Mn(2+) serves as cofactor. In terms of processing, autophosphorylated.

It localises to the cell membrane. The catalysed reaction is ATP + protein L-histidine = ADP + protein N-phospho-L-histidine.. Functionally, member of the two-component regulatory system MprB/MprA which contributes to maintaining a balance among several systems involved in stress resistance and is required for establishment and maintenance of persistent infection in the host. In response to environmental signals MprB acts both as a membrane-associated protein kinase that undergoes autophosphorylation and subsequently transfers the phosphate to MprA, and a protein phosphatase that dephosphorylates phospho-MprA. This Mycobacterium tuberculosis (strain ATCC 25177 / H37Ra) protein is Signal transduction histidine-protein kinase/phosphatase MprB (mprB).